A 173-amino-acid polypeptide reads, in one-letter code: S-ribosylhomocysteine lyase (173 aa).

Residues histidine 54, histidine 58, and cysteine 128 each contribute to the Fe cation site.

The protein belongs to the LuxS family. Homodimer. The cofactor is Fe cation.

The catalysed reaction is S-(5-deoxy-D-ribos-5-yl)-L-homocysteine = (S)-4,5-dihydroxypentane-2,3-dione + L-homocysteine. Its function is as follows. Involved in the synthesis of autoinducer 2 (AI-2) which is secreted by bacteria and is used to communicate both the cell density and the metabolic potential of the environment. The regulation of gene expression in response to changes in cell density is called quorum sensing. Catalyzes the transformation of S-ribosylhomocysteine (RHC) to homocysteine (HC) and 4,5-dihydroxy-2,3-pentadione (DPD). The protein is S-ribosylhomocysteine lyase of Hydrogenovibrio crunogenus (strain DSM 25203 / XCL-2) (Thiomicrospira crunogena).